We begin with the raw amino-acid sequence, 240 residues long: Small ribosomal subunit protein uS3 (240 aa).

Positions 39–109 (IRQYVEKNLS…QIRINVVEVA (71 aa)) constitute a KH type-2 domain. Positions 214–240 (EEQAPAQPATTPKRQRRRQQFEDRSNE) are disordered.

Belongs to the universal ribosomal protein uS3 family. In terms of assembly, part of the 30S ribosomal subunit. Forms a tight complex with proteins S10 and S14.

In terms of biological role, binds the lower part of the 30S subunit head. Binds mRNA in the 70S ribosome, positioning it for translation. The chain is Small ribosomal subunit protein uS3 from Gloeothece citriformis (strain PCC 7424) (Cyanothece sp. (strain PCC 7424)).